The sequence spans 32 residues: MSDIN-like toxin proprotein 1 (32 aa).

The propeptide occupies 1-10 (MSDINVTRLP). Positions 11-18 (GFVPILFP) form a cross-link, cyclopeptide (Gly-Pro). The propeptide occupies 19–32 (CVGDDVNTALTRGE).

Belongs to the MSDIN fungal toxin family. Post-translationally, processed by the macrocyclase-peptidase enzyme POPB to yield a toxic cyclic octapeptide. POPB first removes 10 residues from the N-terminus. Conformational trapping of the remaining peptide forces the enzyme to release this intermediate rather than proceed to macrocyclization. The enzyme rebinds the remaining peptide in a different conformation and catalyzes macrocyclization of the N-terminal 8 residues.

In terms of biological role, probable toxin that belongs to the MSDIN-like toxin family responsible for a large number of food poisoning cases and deaths. The polypeptide is MSDIN-like toxin proprotein 1 (Amanita bisporigera (Destroying angel)).